The sequence spans 510 residues: Histidine ammonia-lyase (510 aa).

Residues 143 to 145 (ASG) constitute a cross-link (5-imidazolinone (Ala-Gly)). S144 is modified (2,3-didehydroalanine (Ser)).

This sequence belongs to the PAL/histidase family. Contains an active site 4-methylidene-imidazol-5-one (MIO), which is formed autocatalytically by cyclization and dehydration of residues Ala-Ser-Gly.

It localises to the cytoplasm. The catalysed reaction is L-histidine = trans-urocanate + NH4(+). It participates in amino-acid degradation; L-histidine degradation into L-glutamate; N-formimidoyl-L-glutamate from L-histidine: step 1/3. In Yersinia pseudotuberculosis serotype I (strain IP32953), this protein is Histidine ammonia-lyase.